The chain runs to 569 residues: Urease subunit beta (569 aa).

In terms of domain architecture, Urease spans 131–569 (GGIDTHIHFI…VSLAQLFSIF (439 aa)). The Ni(2+) site is built by histidine 136, histidine 138, and lysine 219. Lysine 219 is subject to N6-carboxylysine. Histidine 221 contributes to the substrate binding site. Histidine 248 and histidine 274 together coordinate Ni(2+). Residue histidine 322 is the Proton donor of the active site. Position 362 (aspartate 362) interacts with Ni(2+).

This sequence belongs to the metallo-dependent hydrolases superfamily. Urease alpha subunit family. As to quaternary structure, heterohexamer of 3 UreA (alpha) and 3 UreB (beta) subunits. Ni cation is required as a cofactor. In terms of processing, carboxylation allows a single lysine to coordinate two nickel ions.

The protein resides in the cytoplasm. It catalyses the reaction urea + 2 H2O + H(+) = hydrogencarbonate + 2 NH4(+). It functions in the pathway nitrogen metabolism; urea degradation; CO(2) and NH(3) from urea (urease route): step 1/1. The chain is Urease subunit beta from Helicobacter pylori (strain HPAG1).